Consider the following 272-residue polypeptide: Glutamate racemase (272 aa).

Substrate contacts are provided by residues 16–17 and 48–49; these read DS and YG. Cys-79 (proton donor/acceptor) is an active-site residue. Residue 80–81 coordinates substrate; the sequence is NT. The Proton donor/acceptor role is filled by Cys-191. 192 to 193 is a substrate binding site; the sequence is TH.

The protein belongs to the aspartate/glutamate racemases family.

It carries out the reaction L-glutamate = D-glutamate. Its pathway is cell wall biogenesis; peptidoglycan biosynthesis. Provides the (R)-glutamate required for cell wall biosynthesis. The protein is Glutamate racemase of Chlorobaculum parvum (strain DSM 263 / NCIMB 8327) (Chlorobium vibrioforme subsp. thiosulfatophilum).